The following is a 388-amino-acid chain: Staphopain A (388 aa).

The signal sequence occupies residues 1–25 (MKRNFPKLIALSLIFSLSVTPIANA). Residues 26–214 (ESNSNIKAKD…TSQFKSNNYT (189 aa)) constitute a propeptide that is removed on maturation. Catalysis depends on residues cysteine 238, histidine 334, and asparagine 355.

The protein belongs to the peptidase C47 family. As to quaternary structure, in the cytoplasm, prematurely activated/folded ScpA forms a stable non-covalent complex with ScpB. Post-translationally, cleavage leads to the activation of ScpA probably by an auto-catalytic manner.

It is found in the secreted. It catalyses the reaction Broad endopeptidase action on proteins including elastin, but rather limited hydrolysis of small-molecule substrates. Assays are conveniently made with hemoglobin, casein or Z-Phe-Arg-NHMec as substrate.. With respect to regulation, prematurely activated/folded staphopain A is inhibited by staphostatin A (ScpB), which is probably required to protect staphylococcal cytoplasmic proteins from degradation by ScpA. Its function is as follows. Cysteine protease that plays an important role in the inhibition of host innate immune response. Cleaves host elastins found in connective tissues, pulmonary surfactant protein A in the lungs, and the chemokine receptor CXCR2 on leukocytes. Proteolytic cleavage of surfactant protein A impairs bacterial phagocytosis by neutrophils while CXCR2 degradation blocks neutrophil activation and chemotaxis. Additionally, promotes vascular leakage by activating the plasma kallikerin/kinin system, resulting in hypotension. The polypeptide is Staphopain A (sspP) (Staphylococcus aureus (strain Mu50 / ATCC 700699)).